A 119-amino-acid polypeptide reads, in one-letter code: Large ribosomal subunit protein bL20 (119 aa).

This sequence belongs to the bacterial ribosomal protein bL20 family.

Functionally, binds directly to 23S ribosomal RNA and is necessary for the in vitro assembly process of the 50S ribosomal subunit. It is not involved in the protein synthesizing functions of that subunit. The protein is Large ribosomal subunit protein bL20 of Clostridium beijerinckii (strain ATCC 51743 / NCIMB 8052) (Clostridium acetobutylicum).